The following is a 490-amino-acid chain: Homoserine O-acetyltransferase (490 aa).

The 307-residue stretch at 48–354 (NVILVCHALT…NSEYGHDAFL (307 aa)) folds into the AB hydrolase-1 domain. Ser-153 functions as the Nucleophile in the catalytic mechanism. Position 223 (Arg-223) interacts with substrate. Catalysis depends on residues Asp-317 and His-350. Asp-351 contacts substrate. 2 consecutive CBS domains span residues 377–434 (MSHT…ANSI) and 438–490 (MTKN…LYEK).

Belongs to the AB hydrolase superfamily. MetX family. In terms of assembly, homodimer.

The protein resides in the cytoplasm. The enzyme catalyses L-homoserine + acetyl-CoA = O-acetyl-L-homoserine + CoA. The protein operates within amino-acid biosynthesis; L-methionine biosynthesis via de novo pathway; O-acetyl-L-homoserine from L-homoserine: step 1/1. Transfers an acetyl group from acetyl-CoA to L-homoserine, forming acetyl-L-homoserine. The chain is Homoserine O-acetyltransferase from Methanosphaera stadtmanae (strain ATCC 43021 / DSM 3091 / JCM 11832 / MCB-3).